A 175-amino-acid polypeptide reads, in one-letter code: CEN-like protein 4 (175 aa).

Belongs to the phosphatidylethanolamine-binding protein family. As to expression, expressed in vegetative axillary meristems but not in the main shoot meristem.

It is found in the cytoplasm. May form complexes with phosphorylated ligands by interfering with kinases and their effectors. In Nicotiana tabacum (Common tobacco), this protein is CEN-like protein 4 (CET4).